Reading from the N-terminus, the 529-residue chain is Keratin, type II cytoskeletal 74 (529 aa).

The head stretch occupies residues 1 to 139; sequence MSRQLNIKSS…DPEIQKVRAQ (139 aa). The tract at residues 140 to 175 is coil 1A; that stretch reads EREQIKVLNDKFASFIDKVRFLEQQNQVLETKWELL. Positions 140–453 constitute an IF rod domain; that stretch reads EREQIKVLND…KLLEGEECRM (314 aa). The tract at residues 176 to 194 is linker 1; the sequence is QQLDLNNCKKNLEPILEGY. The interval 195–286 is coil 1B; that stretch reads ISNLRKQLET…CLYDAEIAQI (92 aa). The segment at 287–310 is linker 12; the sequence is QTHASETSVILSMDNNRDLDLDSI. Residues 311–449 form a coil 2 region; that stretch reads IAEVRMHYEE…ATYRKLLEGE (139 aa). The tail stretch occupies residues 450–529; the sequence is ECRMSGENPS…ASIPARKATR (80 aa). Positions 484-500 are enriched in low complexity; it reads GASAVAGSSGSTQSGQT. A disordered region spans residues 484–529; the sequence is GASAVAGSSGSTQSGQTKTTEARGGDLKDTQGKSTPASIPARKATR. Positions 503–514 are enriched in basic and acidic residues; sequence TEARGGDLKDTQ. Thr513 bears the Phosphothreonine mark.

It belongs to the intermediate filament family. As to quaternary structure, heterotetramer of two type I and two type II keratins. Highly expressed in hair follicles from scalp. In hair, it is specifically present in the inner root sheath (IRS) of the hair follicle. Present in the IRS Huxley layer, but not in Henle layer or cuticle of the IRS. In the IRS Huxley layer, it is expressed in specialized Huxley cells, termed 'Fluegelzellen, along the area of differentiated Henle cells (at protein level).

Functionally, has a role in hair formation. Specific component of keratin intermediate filaments in the inner root sheath (IRS) of the hair follicle. The sequence is that of Keratin, type II cytoskeletal 74 (KRT74) from Homo sapiens (Human).